Here is a 207-residue protein sequence, read N- to C-terminus: Interleukin-6 (207 aa).

A signal peptide spans 1–18 (MKFFSIASLGLLLVVATA). Positions 26–47 (REDGENSVTRNKPTRASSGKTR) are disordered. A compositionally biased stretch (polar residues) spans 31–44 (NSVTRNKPTRASSG). Cysteine 65 and cysteine 71 are disulfide-bonded. A Phosphoserine modification is found at serine 74. Cysteine 94 and cysteine 104 are joined by a disulfide.

It belongs to the IL-6 superfamily. Component of a hexamer of two molecules each of IL6, IL6R and IL6ST; first binds to IL6R to associate with the signaling subunit IL6ST. Interacts with IL6R (via the N-terminal ectodomain); this interaction may be affected by IL6R-binding with SORL1, hence decreasing IL6 cis signaling. Interacts with SORL1 (via the N-terminal ectodomain); this interaction leads to IL6 internalization and lysosomal degradation. May form a trimeric complex with the soluble SORL1 ectodomain and soluble IL6R receptor; this interaction might stabilize circulating IL6, hence promoting IL6 trans signaling.

The protein resides in the secreted. Functionally, cytokine with a wide variety of biological functions in immunity, tissue regeneration, and metabolism. Binds to IL6R, then the complex associates to the signaling subunit IL6ST/gp130 to trigger the intracellular IL6-signaling pathway. The interaction with the membrane-bound IL6R and IL6ST stimulates 'classic signaling', whereas the binding of IL6 and soluble IL6R to IL6ST stimulates 'trans-signaling'. Alternatively, 'cluster signaling' occurs when membrane-bound IL6:IL6R complexes on transmitter cells activate IL6ST receptors on neighboring receiver cells. In terms of biological role, IL6 is a potent inducer of the acute phase response. Rapid production of IL6 contributes to host defense during infection and tissue injury, but excessive IL6 synthesis is involved in disease pathology. In the innate immune response, is synthesized by myeloid cells, such as macrophages and dendritic cells, upon recognition of pathogens through toll-like receptors (TLRs) at the site of infection or tissue injury. In the adaptive immune response, is required for the differentiation of B cells into immunoglobulin-secreting cells. Plays a major role in the differentiation of CD4(+) T cell subsets. Essential factor for the development of T follicular helper (Tfh) cells that are required for the induction of germinal-center formation. Required to drive naive CD4(+) T cells to the Th17 lineage. Also required for proliferation of myeloma cells and the survival of plasmablast cells. Acts as an essential factor in bone homeostasis and on vessels directly or indirectly by induction of VEGF, resulting in increased angiogenesis activity and vascular permeability. Induces, through 'trans-signaling' and synergistically with IL1B and TNF, the production of VEGF. Involved in metabolic controls, is discharged into the bloodstream after muscle contraction increasing lipolysis and improving insulin resistance. 'Trans-signaling' in central nervous system also regulates energy and glucose homeostasis. Mediates, through GLP-1, crosstalk between insulin-sensitive tissues, intestinal L cells and pancreatic islets to adapt to changes in insulin demand. Also acts as a myokine. Plays a protective role during liver injury, being required for maintenance of tissue regeneration. Also has a pivotal role in iron metabolism by regulating HAMP/hepcidin expression upon inflammation or bacterial infection. Through activation of IL6ST-YAP-NOTCH pathway, induces inflammation-induced epithelial regeneration. This Marmota monax (Woodchuck) protein is Interleukin-6 (IL6).